Here is an 869-residue protein sequence, read N- to C-terminus: Phosphatidylethanolamine N-methyltransferase (869 aa).

Position 2 is an N-acetylserine (Ser-2). At 2–55 (SSCKTTLSEMVGSVTKDRGTINVEARTRSSNVTFKPPVTHDMVRSLFDPTLKKS) the chain is on the lumenal side. Residues 56–76 (LLEKCIALAIISNFFICYWVF) traverse the membrane as a helical segment. The Cytoplasmic segment spans residues 77–86 (QRFGLQFTKY). Residues 87–107 (FFLVQYLFWRIAYNLGIGLVL) form a helical membrane-spanning segment. Residues 108-187 (HYQSHYETLT…EINVWLIFRQ (80 aa)) lie on the Lumenal side of the membrane. A helical transmembrane segment spans residues 188-208 (FVDLILMQDFVTYIIYVYLSI). The Cytoplasmic portion of the chain corresponds to 209 to 212 (PYSW). The helical transmembrane segment at 213–233 (VQIFNWRSLLGVILILFNIWV) threads the bilayer. Topologically, residues 234–258 (KLDAHRVVKDYAWYWGDFFFLEESE) are lumenal. Residues 259–279 (LIFDGVFNISPHPMYSIGYLG) traverse the membrane as a helical segment. At 280 to 291 (YYGLSLICNDYK) the chain is on the cytoplasmic side. A helical transmembrane segment spans residues 292-310 (VLLVSVFGHYSQFLFLKYV). Topologically, residues 311 to 362 (ENPHIERTYGDGTDSDSQMNSRIDDLISKENYDYSRPLINMGLSFNNFNKLR) are lumenal. A helical membrane pass occupies residues 363–383 (FTDYFTIGTVAALMLGTIMNA). Residues 384 to 389 (RFINLN) are Cytoplasmic-facing. Residues 390-410 (YLFITVFVTKLVSWLFISTIL) traverse the membrane as a helical segment. At 411-439 (YKQSQSKWFTRLFLENGYTQVYSYEQWQF) the chain is on the lumenal side. A helical transmembrane segment spans residues 440 to 460 (IYNYYLVLTYTLMIIHTGLQI). Over 461-463 (WSN) the chain is Cytoplasmic. The helical transmembrane segment at 464-484 (FSNINNSQLIFGLILVALQTW) threads the bilayer. Over 485-534 (CDKETRLAISDFGWFYGDFFLSNYISTRKLTSQGIYRYLNHPEAVLGVVG) the chain is Lumenal. Residues 535–555 (VWGTVLMTNFAVTNIILAVLW) traverse the membrane as a helical segment. Topologically, residues 556–869 (TLTNFILVKF…DIKQTLDSLA (314 aa)) are cytoplasmic.

This sequence belongs to the class VI-like SAM-binding methyltransferase superfamily. CHO2 family.

It is found in the endoplasmic reticulum membrane. It catalyses the reaction a 1,2-diacyl-sn-glycero-3-phosphoethanolamine + S-adenosyl-L-methionine = a 1,2-diacyl-sn-glycero-3-phospho-N-methylethanolamine + S-adenosyl-L-homocysteine + H(+). Its pathway is phospholipid metabolism; phosphatidylcholine biosynthesis. Its function is as follows. Catalyzes the first step of the methylation pathway of phosphatidylcholine biosynthesis, the SAM-dependent methylation of phosphatidylethanolamine (PE) to phosphatidylmonomethylethanolamine (PMME). Preferentially converts di-C16:1 substrates. In Saccharomyces cerevisiae (strain ATCC 204508 / S288c) (Baker's yeast), this protein is Phosphatidylethanolamine N-methyltransferase.